The following is a 546-amino-acid chain: uncharacterized protein (546 aa).

5 helical membrane passes run 4 to 23 (ILLENPLLVLFLVAAIGYPL), 30 to 47 (GSSLGVAAVLFVGLAMGS), 57 to 79 (IVYVLGLALFVYTIGLSSGPAFV), 91 to 113 (ALIIGMLLVAAGLVVGAQRLLGF), and 155 to 177 (PVVGYSVAYPMGVMGVVLAISLV). RCK C-terminal domains follow at residues 189-274 (GKRL…FLGE) and 275-359 (VSEE…FFGD). Helical transmembrane passes span 372–394 (FSLGLALGLLLGIIPIPLPGGIT), 399–421 (FAGGPLIVALILGTIGRSGSMVW), 434–456 (IGLVLFLAGVGTRAGYGFVTTLA), 460–482 (GLAIFAAGAVVTCLTALATLWIG), 489–511 (PMSILIGMVAGLQTQPAVLGYAL), and 521–543 (IGYASVYPVATISKILIVQILLT).

Belongs to the AAE transporter (TC 2.A.81) family.

It localises to the cell membrane. This is an uncharacterized protein from Geobacter sulfurreducens (strain ATCC 51573 / DSM 12127 / PCA).